Here is a 179-residue protein sequence, read N- to C-terminus: uncharacterized protein (179 aa).

The signal sequence occupies residues 1 to 26 (MKKNMILFFGILKKLLICILKMEIKC).

This is an uncharacterized protein from Acheta domesticus (House cricket).